The sequence spans 233 residues: Mediator of RNA polymerase II transcription subunit 7 (233 aa).

Residue Lys-185 forms a Glycyl lysine isopeptide (Lys-Gly) (interchain with G-Cter in SUMO1); alternate linkage. A Glycyl lysine isopeptide (Lys-Gly) (interchain with G-Cter in SUMO2); alternate cross-link involves residue Lys-185. A disordered region spans residues 187–213; that stretch reads EPMDADDSNNCTGQNEHQRENSGHRRD. Residue Ser-194 is modified to Phosphoserine. Over residues 202-213 the composition is skewed to basic and acidic residues; it reads EHQRENSGHRRD.

It belongs to the Mediator complex subunit 7 family. In terms of assembly, component of the Mediator complex, which is composed of MED1, MED4, MED6, MED7, MED8, MED9, MED10, MED11, MED12, MED13, MED13L, MED14, MED15, MED16, MED17, MED18, MED19, MED20, MED21, MED22, MED23, MED24, MED25, MED26, MED27, MED29, MED30, MED31, CCNC, CDK8 and CDC2L6/CDK11. The MED12, MED13, CCNC and CDK8 subunits form a distinct module termed the CDK8 module. Mediator containing the CDK8 module is less active than Mediator lacking this module in supporting transcriptional activation. Individual preparations of the Mediator complex lacking one or more distinct subunits have been variously termed ARC, CRSP, DRIP, PC2, SMCC and TRAP. Post-translationally, constitutively sumoylated.

Its subcellular location is the nucleus. In terms of biological role, component of the Mediator complex, a coactivator involved in the regulated transcription of nearly all RNA polymerase II-dependent genes. Mediator functions as a bridge to convey information from gene-specific regulatory proteins to the basal RNA polymerase II transcription machinery. Mediator is recruited to promoters by direct interactions with regulatory proteins and serves as a scaffold for the assembly of a functional preinitiation complex with RNA polymerase II and the general transcription factors. The protein is Mediator of RNA polymerase II transcription subunit 7 (MED7) of Homo sapiens (Human).